The sequence spans 31 residues: Dermaseptin-7.1TR (31 aa).

Gln-31 is modified (glutamine amide).

In terms of tissue distribution, expressed by the skin glands.

The protein localises to the secreted. Its function is as follows. Has antimicrobial activity. This chain is Dermaseptin-7.1TR, found in Phyllomedusa trinitatis (Trinidad leaf frog).